Reading from the N-terminus, the 458-residue chain is Argininosuccinate lyase (458 aa).

Belongs to the lyase 1 family. Argininosuccinate lyase subfamily.

It localises to the cytoplasm. It catalyses the reaction 2-(N(omega)-L-arginino)succinate = fumarate + L-arginine. The protein operates within amino-acid biosynthesis; L-arginine biosynthesis; L-arginine from L-ornithine and carbamoyl phosphate: step 3/3. The chain is Argininosuccinate lyase from Actinobacillus pleuropneumoniae serotype 3 (strain JL03).